The chain runs to 592 residues: Aspartate--tRNA(Asp/Asn) ligase (592 aa).

An L-aspartate-binding site is contributed by glutamate 171. The tract at residues 195-198 (QLFK) is aspartate. Arginine 217 contacts L-aspartate. Residues 217–219 (RDE) and glutamine 226 contribute to the ATP site. Histidine 447 contacts L-aspartate. An ATP-binding site is contributed by glutamate 481. L-aspartate is bound at residue arginine 488. 533–536 (GLDR) provides a ligand contact to ATP.

Belongs to the class-II aminoacyl-tRNA synthetase family. Type 1 subfamily. Homodimer.

Its subcellular location is the cytoplasm. The catalysed reaction is tRNA(Asx) + L-aspartate + ATP = L-aspartyl-tRNA(Asx) + AMP + diphosphate. Functionally, aspartyl-tRNA synthetase with relaxed tRNA specificity since it is able to aspartylate not only its cognate tRNA(Asp) but also tRNA(Asn). Reaction proceeds in two steps: L-aspartate is first activated by ATP to form Asp-AMP and then transferred to the acceptor end of tRNA(Asp/Asn). The protein is Aspartate--tRNA(Asp/Asn) ligase of Psychromonas ingrahamii (strain DSM 17664 / CCUG 51855 / 37).